We begin with the raw amino-acid sequence, 302 residues long: Giardin subunit alpha-5 (302 aa).

4 Annexin repeats span residues 1–72 (MTST…VNMW), 74–144 (SRHE…VAGW), 153–226 (GSVE…AAHF), and 230–298 (GLPV…TLWR).

Belongs to the annexin family. Giardin subunit alpha subfamily.

It is found in the cytoplasm. Its subcellular location is the cytoskeleton. In terms of biological role, giardins are involved in parasite attachment to the intestinal mucosa and in the cytoskeletal disassembly and reassembly that marks the transition from infectious trophozoite to transmissible cyst. They may interact with other cytoskeletal proteins such as microtubules in the microribbons or crossbridges, to maintain the integrity of the ventral disk. In Giardia intestinalis (Giardia lamblia), this protein is Giardin subunit alpha-5.